The sequence spans 294 residues: Transcription termination/antitermination protein NusG (294 aa).

Residues 1 to 91 (MSDPNLNDAV…EEAEPAAPVD (91 aa)) are disordered. Over residues 25 to 39 (DIVEAADSVDPDQAE) the composition is skewed to acidic residues. A compositionally biased stretch (low complexity) spans 40–53 (AADLAAGEPAERAA). The segment covering 59–85 (DDSDEDDAAAEEAVEADDESADEEEAE) has biased composition (acidic residues).

The protein belongs to the NusG family.

In terms of biological role, participates in transcription elongation, termination and antitermination. In Streptomyces griseus, this protein is Transcription termination/antitermination protein NusG.